The sequence spans 88 residues: Thioredoxin-2 (88 aa).

The 87-residue stretch at 2–88 folds into the Thioredoxin domain; it reads SRVIHISSNE…YRNGAKVSEF (87 aa). Catalysis depends on nucleophile residues Cys31 and Cys34. Cys31 and Cys34 are disulfide-bonded.

Belongs to the thioredoxin family.

In terms of biological role, participates in various redox reactions through the reversible oxidation of its active center dithiol to a disulfide and catalyzes dithiol-disulfide exchange reactions. The chain is Thioredoxin-2 (trxB) from Dictyostelium discoideum (Social amoeba).